A 348-amino-acid chain; its full sequence is D-alanine--D-alanine ligase (348 aa).

In terms of domain architecture, ATP-grasp spans 132-334 (KRILEVAGVP…YSDIIKELVV (203 aa)). 162 to 217 (LEKLTFPVFVKPANMGSSVGISKAENESELRSAIDLALKYDSRILIEQGVVAREIE) is an ATP binding site. The Mg(2+) site is built by Asp288, Glu301, and Asn303.

Belongs to the D-alanine--D-alanine ligase family. The cofactor is Mg(2+). Mn(2+) is required as a cofactor.

The protein localises to the cytoplasm. The enzyme catalyses 2 D-alanine + ATP = D-alanyl-D-alanine + ADP + phosphate + H(+). The protein operates within cell wall biogenesis; peptidoglycan biosynthesis. In terms of biological role, cell wall formation. In Streptococcus thermophilus (strain CNRZ 1066), this protein is D-alanine--D-alanine ligase.